A 293-amino-acid polypeptide reads, in one-letter code: Elongation factor Ts (293 aa).

Residues 80–83 (TDFV) form an involved in Mg(2+) ion dislocation from EF-Tu region.

The protein belongs to the EF-Ts family.

The protein localises to the cytoplasm. Functionally, associates with the EF-Tu.GDP complex and induces the exchange of GDP to GTP. It remains bound to the aminoacyl-tRNA.EF-Tu.GTP complex up to the GTP hydrolysis stage on the ribosome. The polypeptide is Elongation factor Ts (Paraburkholderia phymatum (strain DSM 17167 / CIP 108236 / LMG 21445 / STM815) (Burkholderia phymatum)).